The primary structure comprises 185 residues: Peptidyl-tRNA hydrolase (185 aa).

A tRNA-binding site is contributed by tyrosine 14. Histidine 19 (proton acceptor) is an active-site residue. TRNA contacts are provided by tyrosine 65, asparagine 67, and asparagine 113.

It belongs to the PTH family. As to quaternary structure, monomer.

The protein localises to the cytoplasm. It carries out the reaction an N-acyl-L-alpha-aminoacyl-tRNA + H2O = an N-acyl-L-amino acid + a tRNA + H(+). Functionally, hydrolyzes ribosome-free peptidyl-tRNAs (with 1 or more amino acids incorporated), which drop off the ribosome during protein synthesis, or as a result of ribosome stalling. Catalyzes the release of premature peptidyl moieties from peptidyl-tRNA molecules trapped in stalled 50S ribosomal subunits, and thus maintains levels of free tRNAs and 50S ribosomes. The chain is Peptidyl-tRNA hydrolase from Rickettsia bellii (strain OSU 85-389).